The following is a 693-amino-acid chain: Phosphoribosylformylglycinamidine synthase subunit PurL (693 aa).

Residue H34 is part of the active site. ATP-binding residues include Y37 and K76. E78 provides a ligand contact to Mg(2+). Residues 79–82 (SHNH) and R101 contribute to the substrate site. The active-site Proton acceptor is the H80. D102 is a Mg(2+) binding site. Residue Q222 participates in substrate binding. Mg(2+) is bound at residue D248. A substrate-binding site is contributed by 292–294 (ETQ). Residues D470 and G507 each coordinate ATP. Residue S510 participates in substrate binding.

The protein belongs to the FGAMS family. In terms of assembly, monomer. Part of the FGAM synthase complex composed of 1 PurL, 1 PurQ and 2 PurS subunits.

It localises to the cytoplasm. The enzyme catalyses N(2)-formyl-N(1)-(5-phospho-beta-D-ribosyl)glycinamide + L-glutamine + ATP + H2O = 2-formamido-N(1)-(5-O-phospho-beta-D-ribosyl)acetamidine + L-glutamate + ADP + phosphate + H(+). It functions in the pathway purine metabolism; IMP biosynthesis via de novo pathway; 5-amino-1-(5-phospho-D-ribosyl)imidazole from N(2)-formyl-N(1)-(5-phospho-D-ribosyl)glycinamide: step 1/2. In terms of biological role, part of the phosphoribosylformylglycinamidine synthase complex involved in the purines biosynthetic pathway. Catalyzes the ATP-dependent conversion of formylglycinamide ribonucleotide (FGAR) and glutamine to yield formylglycinamidine ribonucleotide (FGAM) and glutamate. The FGAM synthase complex is composed of three subunits. PurQ produces an ammonia molecule by converting glutamine to glutamate. PurL transfers the ammonia molecule to FGAR to form FGAM in an ATP-dependent manner. PurS interacts with PurQ and PurL and is thought to assist in the transfer of the ammonia molecule from PurQ to PurL. The sequence is that of Phosphoribosylformylglycinamidine synthase subunit PurL from Pyrobaculum neutrophilum (strain DSM 2338 / JCM 9278 / NBRC 100436 / V24Sta) (Thermoproteus neutrophilus).